Reading from the N-terminus, the 394-residue chain is Phosphoglycerate kinase (394 aa).

Residues 21 to 23 (DFN), R36, 59 to 62 (HLGR), R118, and R151 contribute to the substrate site. S183 is subject to Phosphoserine. ATP contacts are provided by K201 and G292. Residue T299 is modified to Phosphothreonine. ATP contacts are provided by residues E323 and 350-353 (GGDS).

The protein belongs to the phosphoglycerate kinase family. As to quaternary structure, monomer.

The protein resides in the cytoplasm. It carries out the reaction (2R)-3-phosphoglycerate + ATP = (2R)-3-phospho-glyceroyl phosphate + ADP. It participates in carbohydrate degradation; glycolysis; pyruvate from D-glyceraldehyde 3-phosphate: step 2/5. In Bacillus cereus (strain Q1), this protein is Phosphoglycerate kinase.